A 719-amino-acid chain; its full sequence is Phosphoribosylformylglycinamidine synthase subunit PurL (719 aa).

Residue His47 is part of the active site. The ATP site is built by Tyr50 and Lys89. A Mg(2+)-binding site is contributed by Glu91. Substrate-binding positions include 92-95 (SHNH) and Arg114. Catalysis depends on His93, which acts as the Proton acceptor. Asp115 is a Mg(2+) binding site. Gln238 provides a ligand contact to substrate. Residue Asp266 participates in Mg(2+) binding. 310–312 (ESQ) contacts substrate. ATP is bound by residues Asp488 and Gly525. A Mg(2+)-binding site is contributed by Asn526. Ser528 lines the substrate pocket.

It belongs to the FGAMS family. As to quaternary structure, monomer. Part of the FGAM synthase complex composed of 1 PurL, 1 PurQ and 2 PurS subunits.

It is found in the cytoplasm. It catalyses the reaction N(2)-formyl-N(1)-(5-phospho-beta-D-ribosyl)glycinamide + L-glutamine + ATP + H2O = 2-formamido-N(1)-(5-O-phospho-beta-D-ribosyl)acetamidine + L-glutamate + ADP + phosphate + H(+). It functions in the pathway purine metabolism; IMP biosynthesis via de novo pathway; 5-amino-1-(5-phospho-D-ribosyl)imidazole from N(2)-formyl-N(1)-(5-phospho-D-ribosyl)glycinamide: step 1/2. In terms of biological role, part of the phosphoribosylformylglycinamidine synthase complex involved in the purines biosynthetic pathway. Catalyzes the ATP-dependent conversion of formylglycinamide ribonucleotide (FGAR) and glutamine to yield formylglycinamidine ribonucleotide (FGAM) and glutamate. The FGAM synthase complex is composed of three subunits. PurQ produces an ammonia molecule by converting glutamine to glutamate. PurL transfers the ammonia molecule to FGAR to form FGAM in an ATP-dependent manner. PurS interacts with PurQ and PurL and is thought to assist in the transfer of the ammonia molecule from PurQ to PurL. The chain is Phosphoribosylformylglycinamidine synthase subunit PurL from Jannaschia sp. (strain CCS1).